A 665-amino-acid chain; its full sequence is Envelope glycoprotein (665 aa).

A signal peptide spans 1 to 31 (MESTTLSKPFKNQVNPWGPLIVLLILGRVNP). A receptor-binding domain (RBD) region spans residues 32 to 267 (VALGNSPHQV…KITDSGPRVP (236 aa)). At 32-605 (VALGNSPHQV…FNGSPWFTTL (574 aa)) the chain is on the extracellular side. Residue Asn-43 is glycosylated (N-linked (GlcNAc...) asparagine; by host). Disulfide bonds link Cys-77/Cys-129, Cys-103/Cys-118, Cys-104/Cys-114, Cys-152/Cys-172, and Cys-164/Cys-177. Asp-117 is a binding site for Zn(2+). 2 N-linked (GlcNAc...) asparagine; by host glycosylation sites follow: Asn-199 and Asn-211. A disulfide bond links Cys-209 and Cys-215. The segment at 266 to 307 (VPIGPNPVLSDQRPPSQPRSPPHSNSTPTETPLTLPEPPPAG) is disordered. The N-linked (GlcNAc...) asparagine; by host glycan is linked to Asn-324. Intrachain disulfides connect Cys-334–Cys-337, Cys-334–Cys-558, Cys-364–Cys-418, Cys-383–Cys-395, Cys-425–Cys-438, and Cys-550–Cys-557. The CXXC motif lies at 334-337 (CWLC). Asn-356 and Asn-363 each carry an N-linked (GlcNAc...) asparagine; by host glycan. N-linked (GlcNAc...) asparagine; by host glycans are attached at residues Asn-396, Asn-400, and Asn-432. A fusion peptide region spans residues 470 to 490 (VSLTLALLLGGLTMGGIAAGI). Residues 505–532 (AAVHDDLKEVEKSITNLEKSLTSLSEVV) adopt a coiled-coil conformation. The tract at residues 533 to 549 (LQNRRGLDLLFLKEGGL) is immunosuppression. Positions 550–558 (CAALKEECC) match the CX6CC motif. Residues 606–626 (ISTIMGPLIVLLLILLLGPCI) traverse the membrane as a helical segment. Cys-625 carries the S-palmitoyl cysteine; by host lipid modification. Residues 627–665 (LNRLVQFVKDRISVVQALVLTQQYHQLKSIDPEEMESRE) are Cytoplasmic-facing. The YXXL motif; contains endocytosis signal signature appears at 650–653 (YHQL).

The mature envelope protein (Env) consists of a trimer of SU-TM heterodimers attached by a labile interchain disulfide bond. Post-translationally, specific enzymatic cleavages in vivo yield mature proteins. Envelope glycoproteins are synthesized as an inactive precursor that is N-glycosylated and processed likely by host cell furin or by a furin-like protease in the Golgi to yield the mature SU and TM proteins. The cleavage site between SU and TM requires the minimal sequence [KR]-X-[KR]-R. The R-peptide is released from the C-terminus of the cytoplasmic tail of the TM protein upon particle formation as a result of proteolytic cleavage by the viral protease. Cleavage of this peptide is required for TM to become fusogenic. In terms of processing, the CXXC motif is highly conserved across a broad range of retroviral envelope proteins. It is thought to participate in the formation of a labile disulfide bond possibly with the CX6CC motif present in the transmembrane protein. Isomerization of the intersubunit disulfide bond to an SU intrachain disulfide bond is thought to occur upon receptor recognition in order to allow membrane fusion. The transmembrane protein is palmitoylated. Post-translationally, the R-peptide is palmitoylated.

It localises to the virion membrane. It is found in the host cell membrane. In terms of biological role, the surface protein (SU) attaches the virus to the host cell by binding to its receptor. This interaction triggers the refolding of the transmembrane protein (TM) and is thought to activate its fusogenic potential by unmasking its fusion peptide. Fusion occurs at the host cell plasma membrane. Functionally, the transmembrane protein (TM) acts as a class I viral fusion protein. Under the current model, the protein has at least 3 conformational states: pre-fusion native state, pre-hairpin intermediate state, and post-fusion hairpin state. During viral and target cell membrane fusion, the coiled coil regions (heptad repeats) assume a trimer-of-hairpins structure, positioning the fusion peptide in close proximity to the C-terminal region of the ectodomain. The formation of this structure appears to drive apposition and subsequent fusion of viral and target cell membranes. Membranes fusion leads to delivery of the nucleocapsid into the cytoplasm. The polypeptide is Envelope glycoprotein (env) (Radiation murine leukemia virus).